The following is a 1161-amino-acid chain: DNA-directed RNA polymerase subunit beta' (1161 aa).

Cysteine 60, cysteine 62, cysteine 75, and cysteine 78 together coordinate Zn(2+). Residues aspartate 449, aspartate 451, and aspartate 453 each coordinate Mg(2+). Zn(2+) contacts are provided by cysteine 790, cysteine 864, cysteine 871, and cysteine 874.

Belongs to the RNA polymerase beta' chain family. As to quaternary structure, the RNAP catalytic core consists of 2 alpha, 1 beta, 1 beta' and 1 omega subunit. When a sigma factor is associated with the core the holoenzyme is formed, which can initiate transcription. Mg(2+) serves as cofactor. The cofactor is Zn(2+).

It carries out the reaction RNA(n) + a ribonucleoside 5'-triphosphate = RNA(n+1) + diphosphate. Its function is as follows. DNA-dependent RNA polymerase catalyzes the transcription of DNA into RNA using the four ribonucleoside triphosphates as substrates. The protein is DNA-directed RNA polymerase subunit beta' of Clostridioides difficile (strain 630) (Peptoclostridium difficile).